The chain runs to 325 residues: Probable cell division protein WhiA (325 aa).

A DNA-binding region (H-T-H motif) is located at residues 273 to 306 (SLEELGALADPPLTKDAVAGRIRRLLALADKRAN).

It belongs to the WhiA family.

Involved in cell division and chromosome segregation. The polypeptide is Probable cell division protein WhiA (Parafrankia sp. (strain EAN1pec)).